A 124-amino-acid chain; its full sequence is Schlafen-like protein (124 aa).

Belongs to the Schlafen family. Subgroup poxviridae B3 subfamily.

This chain is Schlafen-like protein, found in Homo sapiens (Human).